The sequence spans 380 residues: Pectinesterase QRT1 (380 aa).

The signal sequence occupies residues 1–26; the sequence is MKVEAFIPAVLLLCFGVMLCLKSSCA. N-linked (GlcNAc...) asparagine glycosylation is found at asparagine 74 and asparagine 137. 2 residues coordinate substrate: threonine 164 and glutamine 198. Aspartate 221 functions as the Proton donor in the catalytic mechanism. N-linked (GlcNAc...) asparagine glycosylation is present at asparagine 227. Residues cysteine 235 and cysteine 255 are joined by a disulfide bond. Residue aspartate 242 is the Nucleophile of the active site. Residues arginine 298 and tryptophan 300 each contribute to the substrate site. Asparagine 302 carries N-linked (GlcNAc...) asparagine glycosylation.

This sequence belongs to the pectinesterase family. As to expression, expressed in flower buds, siliques, developing guard cells, floral nectares, at the stigmatic surface, in the hypocotyl-root transition zone and the area of lateral root emergence. Not expressed in mature leaves.

The protein localises to the secreted. The protein resides in the cell wall. It carries out the reaction [(1-&gt;4)-alpha-D-galacturonosyl methyl ester](n) + n H2O = [(1-&gt;4)-alpha-D-galacturonosyl](n) + n methanol + n H(+). The protein operates within glycan metabolism; pectin degradation; 2-dehydro-3-deoxy-D-gluconate from pectin: step 1/5. Pectinesterase required for cell type-specific pectin degradation to separate microspores. The protein is Pectinesterase QRT1 of Arabidopsis thaliana (Mouse-ear cress).